Reading from the N-terminus, the 197-residue chain is Nucleoid occlusion factor SlmA (197 aa).

The HTH tetR-type domain maps to 7–67 (INRREHILQC…GLIEFIEESL (61 aa)). Positions 30–49 (TTAKLASEVGVSEAALYRHF) form a DNA-binding region, H-T-H motif.

This sequence belongs to the nucleoid occlusion factor SlmA family. In terms of assembly, homodimer. Interacts with FtsZ.

Its subcellular location is the cytoplasm. It localises to the nucleoid. Required for nucleoid occlusion (NO) phenomenon, which prevents Z-ring formation and cell division over the nucleoid. Acts as a DNA-associated cell division inhibitor that binds simultaneously chromosomal DNA and FtsZ, and disrupts the assembly of FtsZ polymers. SlmA-DNA-binding sequences (SBS) are dispersed on non-Ter regions of the chromosome, preventing FtsZ polymerization at these regions. The polypeptide is Nucleoid occlusion factor SlmA (Shewanella oneidensis (strain ATCC 700550 / JCM 31522 / CIP 106686 / LMG 19005 / NCIMB 14063 / MR-1)).